Reading from the N-terminus, the 236-residue chain is MITLPARPESLSFAPQQSALIVVDMQNAYASQGGYLDLAGFDVSATRPVIDNINTAVAAARAAGMLIIWFQNGWDDQYVEAGGPGSPNYHKSNALKTMRQRPELQGKLLAKGGWDYQLVDELTPQEGDIVLPKPRYSGFFNTPLDSILRSRGIRHLVFTGIATNVCVESTLRDGFFLEYFGIVLEDATHQAGPAFAQQAALFNIETFFGWVSDVESFCHALSPAAPLALAKEKRYA.

Asp24 serves as the catalytic Proton acceptor. Residue Lys133 is part of the active site. Cys166 serves as the catalytic Nucleophile.

This sequence belongs to the isochorismatase family. RutB subfamily.

The enzyme catalyses (Z)-3-ureidoacrylate + H2O + H(+) = (Z)-3-aminoacrylate + NH4(+) + CO2. It carries out the reaction (Z)-3-ureidoacrylate + H2O = (Z)-3-aminoacrylate + carbamate + H(+). The catalysed reaction is (Z)-2-methylureidoacrylate + H2O + H(+) = (Z)-2-methylaminoacrylate + NH4(+) + CO2. Hydrolyzes ureidoacrylate to form aminoacrylate and carbamate. The carbamate hydrolyzes spontaneously, thereby releasing one of the nitrogen atoms of the pyrimidine ring as ammonia and one of its carbon atoms as CO2. The protein is Ureidoacrylate amidohydrolase RutB of Klebsiella pneumoniae subsp. pneumoniae (strain ATCC 700721 / MGH 78578).